A 154-amino-acid chain; its full sequence is Nuclear cap-binding protein subunit 2 (154 aa).

MRNA is bound by residues tyrosine 10, tyrosine 33, 102–106 (RVDWD), 113–117 (RQYGR), and 123–124 (QV). Residues 30–108 (CTLYVGNLSF…RLIRVDWDAG (79 aa)) form the RRM domain.

It belongs to the RRM NCBP2 family. Component of the nuclear cap-binding complex (CBC), a heterodimer composed of Cbp80 and Cbp20 that interacts with m7GpppG-capped RNA. Interacts with Ars2.

The protein resides in the nucleus. Component of the cap-binding complex (CBC), which binds co-transcriptionally to the 5' cap of pre-mRNAs and is involved in various processes such as pre-mRNA splicing and RNA-mediated gene silencing (RNAi). The CBC complex is involved in miRNA-mediated RNA interference via its interaction with Ars2 and is required for primary microRNAs (miRNAs) processing. Also involved in innate immunity via the short interfering RNAs (siRNAs) processing machinery by restricting the viral RNA production. In the CBC complex, Cbp20 recognizes and binds capped RNAs (m7GpppG-capped RNA) but requires Cbp80 to stabilize the movement of its N-terminal loop and lock the CBC into a high affinity cap-binding state with the cap structure. This is Nuclear cap-binding protein subunit 2 (Cbp20) from Drosophila melanogaster (Fruit fly).